A 564-amino-acid chain; its full sequence is Proline--tRNA ligase (564 aa).

This sequence belongs to the class-II aminoacyl-tRNA synthetase family. ProS type 1 subfamily. In terms of assembly, homodimer.

The protein localises to the cytoplasm. It catalyses the reaction tRNA(Pro) + L-proline + ATP = L-prolyl-tRNA(Pro) + AMP + diphosphate. In terms of biological role, catalyzes the attachment of proline to tRNA(Pro) in a two-step reaction: proline is first activated by ATP to form Pro-AMP and then transferred to the acceptor end of tRNA(Pro). As ProRS can inadvertently accommodate and process non-cognate amino acids such as alanine and cysteine, to avoid such errors it has two additional distinct editing activities against alanine. One activity is designated as 'pretransfer' editing and involves the tRNA(Pro)-independent hydrolysis of activated Ala-AMP. The other activity is designated 'posttransfer' editing and involves deacylation of mischarged Ala-tRNA(Pro). The misacylated Cys-tRNA(Pro) is not edited by ProRS. In Xylella fastidiosa (strain M12), this protein is Proline--tRNA ligase.